The following is a 186-amino-acid chain: Ribosome-recycling factor (186 aa).

This sequence belongs to the RRF family.

It localises to the cytoplasm. Responsible for the release of ribosomes from messenger RNA at the termination of protein biosynthesis. May increase the efficiency of translation by recycling ribosomes from one round of translation to another. This is Ribosome-recycling factor from Paraburkholderia phymatum (strain DSM 17167 / CIP 108236 / LMG 21445 / STM815) (Burkholderia phymatum).